The chain runs to 161 residues: Type II secretion system protein M (161 aa).

The Cytoplasmic portion of the chain corresponds to methionine 1 to arginine 16. A helical transmembrane segment spans residues leucine 17–alanine 37. The Periplasmic portion of the chain corresponds to proline 38 to leucine 161.

This sequence belongs to the GSP M family. In terms of assembly, type II secretion system is composed of four main components: the outer membrane complex, the inner membrane complex, the cytoplasmic secretion ATPase and the periplasm-spanning pseudopilus. Forms homodimers. Interacts with OutL/GspL. Interacts with OutE/GspE and OutF/GspF.

Its subcellular location is the cell inner membrane. Inner membrane component of the type II secretion system required for the energy-dependent secretion of extracellular factors such as proteases and toxins from the periplasm. Plays a role in the complex assembly and recruits OutL resulting in a stable complex in the inner membrane. Provides thus a link between the energy-providing OutE protein in the cytoplasm and the rest of the T2SS machinery. In Dickeya chrysanthemi (Pectobacterium chrysanthemi), this protein is Type II secretion system protein M (outM).